The primary structure comprises 249 residues: Low affinity immunoglobulin gamma Fc region receptor III-A (249 aa).

Positions 1-16 (MWQLLPSTALLLVASA) are cleaved as a signal peptide. Residues 17–198 (RPQAADLPKA…IQGPPVPSTS (182 aa)) are Extracellular-facing. Ig-like C2-type domains lie at 24-104 (PKAV…LEVH) and 119-172 (EGEP…YFCR). Cystine bridges form between C47-C88 and C127-C171. N-linked (GlcNAc...) asparagine glycans are attached at residues N55, N63, N166, and N179. A helical transmembrane segment spans residues 199–219 (ALLPFWPHIPFAVVMALLFAV). Residues 220–249 (DTGLYFAMQRHLHNSKRAWENSKVSWKQDP) are Cytoplasmic-facing.

Forms a heterooligomeric complex with ITAM-containing signaling subunits FCER1G. Interacts (via transmembrane domain) with signaling subunits; this interaction is a prerequisite for receptor complex expression on the cell surface and intracellular signal transduction. Binds the Fc region of antigen-complexed IgG.

The protein resides in the cell membrane. Its function is as follows. Receptor for the invariable Fc fragment of immunoglobulin gamma (IgG). Optimally activated upon binding of clustered antigen-IgG complexes displayed on cell surfaces, triggers lysis of antibody-coated cells, a process known as antibody-dependent cellular cytotoxicity (ADCC). Does not bind free monomeric IgG, thus avoiding inappropriate effector cell activation in the absence of antigenic trigger. Mediates IgG effector functions on natural killer (NK) cells. Binds antigen-IgG complexes generated upon infection and triggers NK cell-dependent cytokine production and degranulation to limit viral load and propagation. Fc-binding subunit that associates with FCER1G adapter to form functional signaling complexes. Following the engagement of antigen-IgG complexes, triggers phosphorylation of immunoreceptor tyrosine-based activation motif (ITAM)-containing adapter with subsequent activation of phosphatidylinositol 3-kinase signaling and sustained elevation of intracellular calcium that ultimately drive NK cell activation. Mediates enhanced ADCC in response to afucosylated IgGs. This chain is Low affinity immunoglobulin gamma Fc region receptor III-A, found in Mustela putorius furo (European domestic ferret).